The sequence spans 234 residues: Putative ankyrin repeat protein RF_0063 (234 aa).

2 ANK repeats span residues asparagine 149 to isoleucine 180 and tyrosine 184 to leucine 213.

The sequence is that of Putative ankyrin repeat protein RF_0063 from Rickettsia felis (strain ATCC VR-1525 / URRWXCal2) (Rickettsia azadi).